Here is a 29-residue protein sequence, read N- to C-terminus: Vodo peptide N (29 aa).

Positions Gly1–Asn29 form a cross-link, cyclopeptide (Gly-Asn). 3 cysteine pairs are disulfide-bonded: Cys5–Cys19, Cys9–Cys21, and Cys14–Cys26.

This is a cyclic peptide.

Its function is as follows. Probably participates in a plant defense mechanism. The protein is Vodo peptide N of Viola odorata (Sweet violet).